The following is a 563-amino-acid chain: AP-1-like transcription factor yap1 (563 aa).

Residues 23–179 (LAALSSNQPP…AFRERKEKHL (157 aa)) form a disordered region. The Bipartite nuclear localization signal signature appears at 35–42 (QQNDKQRS). Positions 36-48 (QNDKQRSQAKTDP) are enriched in basic and acidic residues. Positions 52–67 (PGNMSSGSFSMSPGFN) are enriched in low complexity. The Bipartite nuclear localization signal motif lies at 68–75 (KTHPGSGG). A compositionally biased stretch (acidic residues) spans 79–94 (GDDESPFLDFNPELDF). Composition is skewed to basic and acidic residues over residues 112 to 144 (SEEH…DKAA) and 170 to 179 (AFRERKEKHL). A bZIP domain is found at 154–217 (SEPTSKRKAQ…ERLQVELREY (64 aa)). A basic motif region spans residues 159-180 (KRKAQNRAAQRAFRERKEKHLK). The segment at 182–189 (LETKVDEL) is leucine-zipper. The interval 211-332 (QVELREYRKR…PSPKVPSVYN (122 aa)) is transcription activation 1. 2 disordered regions span residues 267-380 (IFNG…KLND) and 394-420 (DAVR…TPGP). A n-CRD region spans residues 284–296 (SSPATSDSQVPGV). Polar residues predominate over residues 300–309 (ETLNGSNNRG). Low complexity predominate over residues 336–362 (SASSHDSSNSCSPSSSSDSHQSQMLSS). Composition is skewed to polar residues over residues 363-380 (NGTS…KLND) and 401-416 (ESVS…NYEQ). Residues 377 to 459 (KLNDSVQNHH…SQDFGTFFDD (83 aa)) form a transcription activation 2 region. 3 disulfide bridges follow: C510-C534, C510-C543, and C534-C543. The interval 510 to 543 (CTKIWDRLQSMEKFRNGEIDVDNLCSELRTKARC) is c-CRD. Residues 528-535 (IDVDNLCS) carry the Nuclear export signal motif.

The protein belongs to the bZIP family. YAP subfamily. In terms of processing, depending on the oxidative stress inducing agent, yap1 can undergo two distinct conformational changes, both involving disulfide bond formation, and both masking the nuclear export signal, thus abolishing nuclear export.

Its subcellular location is the nucleus. It localises to the cytoplasm. Functionally, transcription activator involved in oxidative stress response and redox homeostasis. Regulates the transcription of genes encoding antioxidant enzymes and components of the cellular thiol-reducing pathways. The protein is AP-1-like transcription factor yap1 of Aspergillus oryzae (strain ATCC 42149 / RIB 40) (Yellow koji mold).